A 341-amino-acid polypeptide reads, in one-letter code: Phenylalanine--tRNA ligase alpha subunit (341 aa).

E256 is a Mg(2+) binding site.

The protein belongs to the class-II aminoacyl-tRNA synthetase family. Phe-tRNA synthetase alpha subunit type 1 subfamily. Tetramer of two alpha and two beta subunits. It depends on Mg(2+) as a cofactor.

The protein resides in the cytoplasm. The enzyme catalyses tRNA(Phe) + L-phenylalanine + ATP = L-phenylalanyl-tRNA(Phe) + AMP + diphosphate + H(+). This Leptospira interrogans serogroup Icterohaemorrhagiae serovar Lai (strain 56601) protein is Phenylalanine--tRNA ligase alpha subunit.